The following is a 123-amino-acid chain: NHL-repeat-containing protein 4 (123 aa).

NHL repeat units follow at residues 35–78 (QPLG…FPRA) and 79–119 (GPPI…YQGL).

This is NHL-repeat-containing protein 4 (NHLRC4) from Homo sapiens (Human).